The sequence spans 262 residues: uncharacterized protein (262 aa).

Disordered regions lie at residues 1-30 and 232-262; these read MGKKKFIENEDGTTEVQETESEAPKDKKEK and EEEEVEDEADEETDVKEKVKEEEDEDEDMEE. Composition is skewed to acidic residues over residues 9–21, 232–245, and 253–262; these read NEDGTTEVQETES, EEEEVEDEADEETD, and EEDEDEDMEE.

This is an uncharacterized protein from Caenorhabditis elegans.